The following is a 300-amino-acid chain: tRNA dimethylallyltransferase (300 aa).

11–18 is an ATP binding site; that stretch reads GPTAVGKS. Substrate is bound at residue 13–18; sequence TAVGKS. Residues 35–38 form an interaction with substrate tRNA region; sequence DSIQ.

The protein belongs to the IPP transferase family. As to quaternary structure, monomer. It depends on Mg(2+) as a cofactor.

It carries out the reaction adenosine(37) in tRNA + dimethylallyl diphosphate = N(6)-dimethylallyladenosine(37) in tRNA + diphosphate. In terms of biological role, catalyzes the transfer of a dimethylallyl group onto the adenine at position 37 in tRNAs that read codons beginning with uridine, leading to the formation of N6-(dimethylallyl)adenosine (i(6)A). The sequence is that of tRNA dimethylallyltransferase from Borreliella afzelii (strain PKo) (Borrelia afzelii).